Reading from the N-terminus, the 406-residue chain is [Pyruvate dehydrogenase (acetyl-transferring)] kinase isozyme 3, mitochondrial (406 aa).

In terms of domain architecture, Histidine kinase spans 131-362 (IEYKEKFGFD…DAVIYLKALS (232 aa)). 247–254 (ELFKNSMR) is an ATP binding site. Lys-278 carries the post-translational modification N6-succinyllysine. Residues Asp-287, 306-307 (ST), and 323-328 (GFGYGL) contribute to the ATP site. The disordered stretch occupies residues 383 to 406 (TPEADDWSNPSSEPRDASKYKAKQ). A compositionally biased stretch (basic and acidic residues) spans 395–406 (EPRDASKYKAKQ).

This sequence belongs to the PDK/BCKDK protein kinase family. Homodimer. Interacts with the pyruvate dehydrogenase complex subunit DLAT, and is part of the multimeric pyruvate dehydrogenase complex that contains multiple copies of pyruvate dehydrogenase (E1), dihydrolipoamide acetyltransferase (DLAT, E2) and lipoamide dehydrogenase (DLD, E3). As to expression, expressed in heart, skeletal muscle, spinal cord, as well as fetal and adult brain.

It is found in the mitochondrion matrix. It carries out the reaction L-seryl-[pyruvate dehydrogenase E1 alpha subunit] + ATP = O-phospho-L-seryl-[pyruvate dehydrogenase E1 alpha subunit] + ADP + H(+). With respect to regulation, activated by interaction with DLAT. Inhibited by AZD7545, dichloroacetate and radicicol. Inhibits pyruvate dehydrogenase activity by phosphorylation of the E1 subunit PDHA1, and thereby regulates glucose metabolism and aerobic respiration. Can also phosphorylate PDHA2. Decreases glucose utilization and increases fat metabolism in response to prolonged fasting, and as adaptation to a high-fat diet. Plays a role in glucose homeostasis and in maintaining normal blood glucose levels in function of nutrient levels and under starvation. Plays a role in the generation of reactive oxygen species. The polypeptide is [Pyruvate dehydrogenase (acetyl-transferring)] kinase isozyme 3, mitochondrial (PDK3) (Homo sapiens (Human)).